Consider the following 415-residue polypeptide: Alditol oxidase (415 aa).

One can recognise an FAD-binding PCMH-type domain in the interval 12–179 (ITYTAKEVHR…TALTLDLEPA (168 aa)). Residue His-46 is modified to Pros-8alpha-FAD histidine. FAD is bound by residues Ser-106, Ser-111, Gly-114, 118–121 (TGTH), and Val-169. Ser-106 contacts xylitol. Positions 317, 319, and 342 each coordinate xylitol. Arg-319 contacts FAD. His-369 provides a ligand contact to FAD. Position 372 (Lys-372) interacts with xylitol.

The protein belongs to the oxygen-dependent FAD-linked oxidoreductase family. In terms of assembly, monomer. The cofactor is FAD.

The catalysed reaction is an alditol + O2 = an aldose + H2O2. It carries out the reaction xylitol + O2 = D-xylose + H2O2. The enzyme catalyses D-sorbitol + O2 = D-glucose + H2O2. Functionally, oxidase that performs selective oxidation of the terminal primary hydroxyl group of several alditols, with a reduction of O2 to H2O2. Shows highest activity on xylitol and D-sorbitol, and to a lesser extent, can also use galactitol, D-mannitol, and D-arabitol as substrates in vitro. Is not active on D-glucose, D-xylose, D-galactose, D-mannose, D-fructose, L-sorbose, L-fucose, myoinositol, glycerol, ethyl alcohol, and meso-erythritol. The polypeptide is Alditol oxidase (Streptomyces sp. (strain IKD472 / FERM P-14339)).